A 292-amino-acid chain; its full sequence is ATP synthase gamma chain (292 aa).

Belongs to the ATPase gamma chain family. In terms of assembly, F-type ATPases have 2 components, CF(1) - the catalytic core - and CF(0) - the membrane proton channel. CF(1) has five subunits: alpha(3), beta(3), gamma(1), delta(1), epsilon(1). CF(0) has three main subunits: a, b and c.

The protein resides in the cell inner membrane. Functionally, produces ATP from ADP in the presence of a proton gradient across the membrane. The gamma chain is believed to be important in regulating ATPase activity and the flow of protons through the CF(0) complex. The protein is ATP synthase gamma chain of Magnetococcus marinus (strain ATCC BAA-1437 / JCM 17883 / MC-1).